We begin with the raw amino-acid sequence, 968 residues long: uncharacterized protein (968 aa).

5 disordered regions span residues 124 to 177 (SSIS…FSFP), 348 to 437 (QEDS…VNDS), 572 to 595 (TTTT…QQNT), 608 to 627 (PKAS…GSSK), and 837 to 877 (KASK…KKGK). The span at 131–157 (TIESNYLSNPSSPCQSTPILESSTPFS) shows a compositional bias: polar residues. 3 stretches are compositionally biased toward low complexity: residues 158–177 (QKLM…FSFP), 352–431 (NNNN…NCNN), and 572–593 (TTTT…QQQQ). Residues 841–857 (DSSSSPTASSAAPGDSS) show a composition bias toward low complexity.

This is an uncharacterized protein from Dictyostelium discoideum (Social amoeba).